Here is a 230-residue protein sequence, read N- to C-terminus: Urease accessory protein UreF (230 aa).

Belongs to the UreF family. UreD, UreF and UreG form a complex that acts as a GTP-hydrolysis-dependent molecular chaperone, activating the urease apoprotein by helping to assemble the nickel containing metallocenter of UreC. The UreE protein probably delivers the nickel.

The protein localises to the cytoplasm. Functionally, required for maturation of urease via the functional incorporation of the urease nickel metallocenter. The chain is Urease accessory protein UreF from Cupriavidus necator (strain ATCC 17699 / DSM 428 / KCTC 22496 / NCIMB 10442 / H16 / Stanier 337) (Ralstonia eutropha).